A 196-amino-acid polypeptide reads, in one-letter code: MQPEVEPLISPNLGAPGSHRETGSFLVDLESMEESMSRSLGKPAKSSKQYLRQVISEYEALDRELPCIRKFSEPPSAQPLCLCMETSEDFTHVEVLQALEAELPGAMESGRVNSIRYENMNVICGTAGRRDRWLITVTDFQTRSRLLRSGLTLRGTAYPLVRHDDLLLGDYRLHLRRSLVRRRMLEALGAEPADED.

Positions 1–21 (MQPEVEPLISPNLGAPGSHRE) are disordered.

This is an uncharacterized protein from Mus musculus (Mouse).